A 220-amino-acid polypeptide reads, in one-letter code: Large ribosomal subunit protein uL3 (220 aa).

A disordered region spans residues 126–158 (GFQGAIKRHGQSRGPMSHGSRYHRRPGSMGMAS).

This sequence belongs to the universal ribosomal protein uL3 family. As to quaternary structure, part of the 50S ribosomal subunit. Forms a cluster with proteins L14 and L19.

Functionally, one of the primary rRNA binding proteins, it binds directly near the 3'-end of the 23S rRNA, where it nucleates assembly of the 50S subunit. The chain is Large ribosomal subunit protein uL3 from Macrococcus caseolyticus (strain JCSC5402) (Macrococcoides caseolyticum).